The chain runs to 548 residues: 5-epi-aristolochene synthase 3 (548 aa).

Aspartate 301, aspartate 305, aspartate 444, threonine 448, and glutamate 452 together coordinate Mg(2+). The short motif at 301–305 (DDTFD) is the DDXXD motif element.

Belongs to the terpene synthase family. As to quaternary structure, monomer. The cofactor is Mg(2+). As to expression, expressed in roots, but not in shoots.

The protein localises to the cytoplasm. The enzyme catalyses (2E,6E)-farnesyl diphosphate = (+)-5-epi-aristolochene + diphosphate. It participates in secondary metabolite biosynthesis; terpenoid biosynthesis. Its function is as follows. Catalyzes the cyclization of trans,trans-farnesyl diphosphate (FPP) to the bicyclic intermediate 5-epi-aristolochene, initial step in the conversion of FPP to the sesquiterpenoid antifungal phytoalexin capsidiol. Produces germacrene A as an enzyme-bound intermediate that is not released by the enzyme, but is further cyclized to produce the bicyclic 5-epi-aristolochene. This is 5-epi-aristolochene synthase 3 from Nicotiana attenuata (Coyote tobacco).